We begin with the raw amino-acid sequence, 131 residues long: MRHYEIVFMVHPDQSEQVPGMIERYSATITGAEGTIHRLEDWGRRQLAYPINKLHKAHYVLLNVEAPQEAIDELETNFRFNDAVIRSMVMRVKHAVTEASPMVKAKDERRERREDFANETSDDADAGDSEE.

The tract at residues 100-131 is disordered; that stretch reads SPMVKAKDERRERREDFANETSDDADAGDSEE. Residues 104 to 116 are compositionally biased toward basic and acidic residues; sequence KAKDERRERREDF. A compositionally biased stretch (acidic residues) spans 120–131; it reads TSDDADAGDSEE.

This sequence belongs to the bacterial ribosomal protein bS6 family.

Functionally, binds together with bS18 to 16S ribosomal RNA. This chain is Small ribosomal subunit protein bS6, found in Erwinia tasmaniensis (strain DSM 17950 / CFBP 7177 / CIP 109463 / NCPPB 4357 / Et1/99).